The following is a 155-amino-acid chain: SsrA-binding protein (155 aa).

The span at 135-147 (TIKRRDQERDIKK) shows a compositional bias: basic and acidic residues. A disordered region spans residues 135-155 (TIKRRDQERDIKKQMKHYNAR).

This sequence belongs to the SmpB family.

It is found in the cytoplasm. Its function is as follows. Required for rescue of stalled ribosomes mediated by trans-translation. Binds to transfer-messenger RNA (tmRNA), required for stable association of tmRNA with ribosomes. tmRNA and SmpB together mimic tRNA shape, replacing the anticodon stem-loop with SmpB. tmRNA is encoded by the ssrA gene; the 2 termini fold to resemble tRNA(Ala) and it encodes a 'tag peptide', a short internal open reading frame. During trans-translation Ala-aminoacylated tmRNA acts like a tRNA, entering the A-site of stalled ribosomes, displacing the stalled mRNA. The ribosome then switches to translate the ORF on the tmRNA; the nascent peptide is terminated with the 'tag peptide' encoded by the tmRNA and targeted for degradation. The ribosome is freed to recommence translation, which seems to be the essential function of trans-translation. The chain is SsrA-binding protein from Streptococcus pyogenes serotype M3 (strain SSI-1).